A 696-amino-acid chain; its full sequence is Verrucotoxin subunit beta (696 aa).

In terms of domain architecture, B30.2/SPRY spans 506–696 (HMPGVETIKD…GCTTESQWSN (191 aa)).

Belongs to the SNTX/VTX toxin family. Tetramer composed of 2 alpha and 2 beta subunits. In terms of processing, glycosylated. Expressed by the venom gland.

The protein localises to the secreted. Its function is as follows. This lethal (towards mice) toxin induces hemolytic, cytolytic and hypotensive activities. Inhibits calcium channels and may activate ATP-sensitive potassium channels in frog atrial heart muscle. In guinea-pig ventricular myocytes, it modulates calcium channel activity through the beta-adrenoceptor-cAMP-PKA pathway (ADRB). The protein is Verrucotoxin subunit beta of Synanceia verrucosa (Reef stonefish).